The chain runs to 230 residues: Probable nicotinate-nucleotide adenylyltransferase (230 aa).

The protein belongs to the NadD family.

The catalysed reaction is nicotinate beta-D-ribonucleotide + ATP + H(+) = deamido-NAD(+) + diphosphate. It participates in cofactor biosynthesis; NAD(+) biosynthesis; deamido-NAD(+) from nicotinate D-ribonucleotide: step 1/1. Its function is as follows. Catalyzes the reversible adenylation of nicotinate mononucleotide (NaMN) to nicotinic acid adenine dinucleotide (NaAD). The polypeptide is Probable nicotinate-nucleotide adenylyltransferase (Pseudomonas putida (strain ATCC 47054 / DSM 6125 / CFBP 8728 / NCIMB 11950 / KT2440)).